An 87-amino-acid chain; its full sequence is Probable Fe(2+)-trafficking protein (87 aa).

The protein belongs to the Fe(2+)-trafficking protein family.

In terms of biological role, could be a mediator in iron transactions between iron acquisition and iron-requiring processes, such as synthesis and/or repair of Fe-S clusters in biosynthetic enzymes. The protein is Probable Fe(2+)-trafficking protein of Francisella philomiragia subsp. philomiragia (strain ATCC 25017 / CCUG 19701 / FSC 153 / O#319-036).